Here is a 507-residue protein sequence, read N- to C-terminus: MAAIGVHLGCTCACVAVFKDGRADVVANDAGDRVTPAVVGFLEKEVIVGLAAKQSRVRNATNTIVKVKQILGRSYGDPIAQKHITESKCTVVEKGGKPKYEIDTGETQKLVSSEDVAKLIFSKMKETAQSALGSDVNDVVITVPFDFGESQKKALGEAASAAGFNILRMIHEPSAALLAYGIGQESPTGKSNVLVYKLGGTSLSVTMIEVNSGIYRVLATSTYDGIGGVCFTEALAQHLASEFQRTYKQDIRGNARAMMKLMNSADVAKHALSTLGSSNCFVDSLYDGIDFDCSVSRARFELICSSLFNQCIDPIKKLLEQVGFKATDVNQVVLCGGSARIPKLQQLIKDLFPEVEMLSSIPPDEVIPVGAAIQAGILLGKENTDLDTITIECSASDMLVKEIDESGNKFTVLLPSGTPLPARRQHVLQAPGNISSVCLELYESDGKSSVSEECKFAQVVLKDLQKKTSGVRDILTVLTMKRDGSLHITCTDKDSGKSEMITIEDTS.

This sequence belongs to the heat shock protein 70 family. In terms of assembly, component of ribosome-associated complex (RAC).

It is found in the cytoplasm. The protein resides in the cytosol. Its function is as follows. Component of the ribosome-associated complex (RAC), a complex involved in folding or maintaining nascent polypeptides in a folding-competent state. The polypeptide is Heat shock 70 kDa protein 14-B (hspa14-b) (Xenopus laevis (African clawed frog)).